A 525-amino-acid polypeptide reads, in one-letter code: Probable pectinesterase/pectinesterase inhibitor 44 (525 aa).

The signal sequence occupies residues 1–19 (MSCLKYFLILLMLGLCVSS). The tract at residues 30–153 (VPASEFVSSI…YSMLRELLPL (124 aa)) is pectinesterase inhibitor 44. The N-linked (GlcNAc...) asparagine glycan is linked to Asn98. The tract at residues 157-192 (EQKPKAVSKPGPIAKGPKAPPGRKLRDTDEDESLQF) is disordered. The tract at residues 212–509 (DVSVALDGTG…FTVSQFIKGN (298 aa)) is pectinesterase 44. N-linked (GlcNAc...) asparagine glycans are attached at residues Asn222 and Asn278. The substrate site is built by Thr287 and Gln317. Asp340 functions as the Proton donor; for pectinesterase activity in the catalytic mechanism. A disulfide bond links Cys354 and Cys374. Asp361 (nucleophile; for pectinesterase activity) is an active-site residue. N-linked (GlcNAc...) asparagine glycosylation is found at Asn409 and Asn421. Residues Arg429 and Trp431 each coordinate substrate. N-linked (GlcNAc...) asparagine glycans are attached at residues Asn443, Asn492, and Asn499.

This sequence in the N-terminal section; belongs to the PMEI family. In the C-terminal section; belongs to the pectinesterase family. Expressed in siliques.

It localises to the secreted. The protein localises to the cell wall. The catalysed reaction is [(1-&gt;4)-alpha-D-galacturonosyl methyl ester](n) + n H2O = [(1-&gt;4)-alpha-D-galacturonosyl](n) + n methanol + n H(+). It functions in the pathway glycan metabolism; pectin degradation; 2-dehydro-3-deoxy-D-gluconate from pectin: step 1/5. In terms of biological role, acts in the modification of cell walls via demethylesterification of cell wall pectin. In Arabidopsis thaliana (Mouse-ear cress), this protein is Probable pectinesterase/pectinesterase inhibitor 44 (PME44).